A 1432-amino-acid polypeptide reads, in one-letter code: MGARASVLSGGKLDTWERIRLRPGGKKKYALKHLIWASRELERFTLNPGLLETSEGCKQIIGQLQPSIQTGSEEIRSLYNTVATLYCVHERIEVKDTKEAVEKMEEEQNKSKKKTQQAAADSSQVSQNYPIVQNLQGQMVHQAISPRTLNAWVKVIEEKAFSPEVIPMFSALSEGATPQDLNTMLNTVGGHQAAMQMLKETINDEAAEWDRLHPVHAGPVAPGQMREPRGSDIAGTTSTLQEQIAWMTSNPPIPVGEIYKRWIILGLNKIVRMYSPVSILDIRQGPKEPFRDYVDRFYKTLRAEQASQDVKNWMTETLLVQNANPDCKTILKALGPQATLEEMMTACQGVGGPGHKARVLAEAMSQVTGSATAVMMQRGNFKGPRKSIKCFNCGKEGHTAKNCRAPRKKGCWKCGREGHQMKDCTERQANFLREDLAFPQGKAGEFSSEQTRANSPTSRELRVWGGDNPLSETGAERQGTVSFSFPQITLWQRPLVTIKIGGQLKEALLDTGADDTVLEEINLPGKWKPKMIGGIGGFIKVRQYDQILIEICGYKAMGTVLVGPTPVNIIGRNLLTQIGCTLNFPISPIETVPVKLKPGMDGPKVKQWPLTEEKIKALTEICTEMEKEGKISRIGPENPYNTPIFAIKKKDSTKWRKLVDFRELNKRTQDFWEVQLGIPHPAGLKKKKSVTVLDVGDAYFSVPLDEDFRKYTAFTIPSINNETPGIRYQYNVLPQGWKGSPAIFQSSMTKILEPFRKQNPEIVIYQYMDDLYVGSDLEIGQHRTKIEELREHLLRWGFTTPDKKHQKEPPFLWMGYELHPDKWTVQPINLPEKESWTVNDIQKLVGKLNWASQIYAGIKVKQLCKLLRGTKALTEVVPLTEEAELELAENREILKEPVHGVYYDPSKDLIAELQKQGDGQWTYQIYQEPFKNLKTGKYARTRGAHTNDVKQLTEAVQKIATESIVIWGKTPKFKLPIQKETWETWWIEYWQATWIPEWEFVNTPPLVKLWYQLEKEPIIGAETFYVDGAANRETKLGKAGYVTDRGRQKVVPFTDTTNQKTELQAINLALQDSGLEVNIVTDSQYALGIIQAQPDKSESELVSQIIEQLIKKEKVYLAWVPAHKGIGGNEQVDKLVSQGIRKVLFLDGIDKAQEEHEKYHNNWRAMASDFNLPPVVAKEIVASCDKCQLKGEAMHGQVDCSPGIWQLDCTHLEGKVILVAVHVASGYIEAEVIPAETGQETAYFLLKLAGRWPVKVVHTDNGSNFTSATVKAACWWAGIKQEFGIPYNPQSQGVVESMNKELKKIIGQVRDQAEHLKTAVQMAVFIHNFKRKGGIGGYSAGERIIDIIATDIQTRELQKQIIKIQNFRVYYRDSRDPIWKGPAKLLWKGEGAVVIQDNSDIKVVPRRKVKIIRDYGKQMAGDDCVASRQDED.

Gly-2 carries the N-myristoyl glycine; by host lipid modification. The tract at residues 7 to 31 (VLSGGKLDTWERIRLRPGGKKKYAL) is interaction with Gp41. An interaction with host CALM1 region spans residues 8–43 (LSGGKLDTWERIRLRPGGKKKYALKHLIWASRELER). The interaction with host AP3D1 stretch occupies residues 12 to 19 (KLDTWERI). An interaction with membrane phosphatidylinositol 4,5-bisphosphate and RNA region spans residues 14–33 (DTWERIRLRPGGKKKYALKH). The short motif at 16-22 (WERIRLR) is the Nuclear export signal element. A Nuclear localization signal motif is present at residues 26–32 (KKKYALK). Residues 73-77 (EEIRS) are interaction with membrane phosphatidylinositol 4,5-bisphosphate. The disordered stretch occupies residues 102–125 (EKMEEEQNKSKKKTQQAAADSSQV). Positions 116–125 (QQAAADSSQV) are enriched in low complexity. Tyr-129 is subject to Phosphotyrosine; by host. An interaction with human PPIA/CYPA and NUP153 region spans residues 186-224 (NTVGGHQAAMQMLKETINDEAAEWDRLHPVHAGPVAPGQ). The segment at 274-360 (YSPVSILDIR…GGPGHKARVL (87 aa)) is dimerization/Multimerization of capsid protein p24. 2 consecutive CCHC-type zinc fingers follow at residues 388–405 (IKCF…NCRA) and 409–426 (KGCW…DCTE). A dimerization of protease region spans residues 486–490 (PQITL). Positions 505-574 (KEALLDTGAD…TPVNIIGRNL (70 aa)) constitute a Peptidase A2 domain. Residue Asp-510 is the For protease activity; shared with dimeric partner of the active site. Dimerization of protease regions lie at residues 534 to 540 (GIGGFIK) and 573 to 585 (NLLT…LNFP). The Reverse transcriptase domain maps to 628 to 818 (EGKISRIGPE…PPFLWMGYEL (191 aa)). Mg(2+) contacts are provided by Asp-694, Asp-769, and Asp-770. An RT 'primer grip' region spans residues 811 to 819 (FLWMGYELH). Positions 982-998 (WETWWIEYWQATWIPEW) match the Tryptophan repeat motif motif. The region spanning 1018 to 1141 (IIGAETFYVD…VDKLVSQGIR (124 aa)) is the RNase H type-1 domain. Residues Asp-1027, Glu-1062, Asp-1082, and Asp-1133 each contribute to the Mg(2+) site. The Integrase-type zinc finger occupies 1147-1188 (DGIDKAQEEHEKYHNNWRAMASDFNLPPVVAKEIVASCDKCQ). Zn(2+) contacts are provided by His-1156, His-1160, Cys-1184, and Cys-1187. The Integrase catalytic domain occupies 1198–1348 (VDCSPGIWQL…SAGERIIDII (151 aa)). Mg(2+)-binding residues include Asp-1208, Asp-1260, and Glu-1296. The segment at residues 1367 to 1414 (FRVYYRDSRDPIWKGPAKLLWKGEGAVVIQDNSDIKVVPRRKVKIIRD) is a DNA-binding region (integrase-type).

Homotrimer; further assembles as hexamers of trimers. Interacts with gp41 (via C-terminus). Interacts with host CALM1; this interaction induces a conformational change in the Matrix protein, triggering exposure of the myristate group. Interacts with host AP3D1; this interaction allows the polyprotein trafficking to multivesicular bodies during virus assembly. Part of the pre-integration complex (PIC) which is composed of viral genome, matrix protein, Vpr and integrase. In terms of assembly, homodimer; the homodimer further multimerizes as homohexamers or homopentamers. Interacts with human PPIA/CYPA; This interaction stabilizes the capsid. Interacts with human NUP153. Interacts with host PDZD8; this interaction stabilizes the capsid. Interacts with monkey TRIM5; this interaction destabilizes the capsid. As to quaternary structure, homodimer, whose active site consists of two apposed aspartic acid residues. Heterodimer of p66 RT and p51 RT (RT p66/p51). Heterodimerization of RT is essential for DNA polymerase activity. The overall folding of the subdomains is similar in p66 RT and p51 RT but the spatial arrangements of the subdomains are dramatically different. In terms of assembly, homotetramer; may further associate as a homohexadecamer. Part of the pre-integration complex (PIC) which is composed of viral genome, matrix protein, Vpr and integrase. Interacts with human SMARCB1/INI1 and human PSIP1/LEDGF isoform 1. Interacts with human KPNA3; this interaction might play a role in nuclear import of the pre-integration complex. Interacts with human NUP153; this interaction might play a role in nuclear import of the pre-integration complex. Mg(2+) serves as cofactor. Post-translationally, specific enzymatic cleavages by the viral protease yield mature proteins. The protease is released by autocatalytic cleavage. The polyprotein is cleaved during and after budding, this process is termed maturation. Proteolytic cleavage of p66 RT removes the RNase H domain to yield the p51 RT subunit. Nucleocapsid protein p7 might be further cleaved after virus entry. In terms of processing, tyrosine phosphorylated presumably in the virion by a host kinase. Phosphorylation is apparently not a major regulator of membrane association. Phosphorylated possibly by host MAPK1; this phosphorylation is necessary for Pin1-mediated virion uncoating. Post-translationally, methylated by host PRMT6, impairing its function by reducing RNA annealing and the initiation of reverse transcription.

Its subcellular location is the host cell membrane. It localises to the host endosome. The protein localises to the host multivesicular body. The protein resides in the virion membrane. It is found in the host nucleus. Its subcellular location is the host cytoplasm. It localises to the virion. It catalyses the reaction Specific for a P1 residue that is hydrophobic, and P1' variable, but often Pro.. The enzyme catalyses Endohydrolysis of RNA in RNA/DNA hybrids. Three different cleavage modes: 1. sequence-specific internal cleavage of RNA. Human immunodeficiency virus type 1 and Moloney murine leukemia virus enzymes prefer to cleave the RNA strand one nucleotide away from the RNA-DNA junction. 2. RNA 5'-end directed cleavage 13-19 nucleotides from the RNA end. 3. DNA 3'-end directed cleavage 15-20 nucleotides away from the primer terminus.. The catalysed reaction is 3'-end directed exonucleolytic cleavage of viral RNA-DNA hybrid.. It carries out the reaction DNA(n) + a 2'-deoxyribonucleoside 5'-triphosphate = DNA(n+1) + diphosphate. The viral protease is inhibited by many synthetic protease inhibitors (PIs), such as amprenavir, atazanavir, indinavir, loprinavir, nelfinavir, ritonavir and saquinavir. RT can be inhibited either by nucleoside RT inhibitors (NRTIs) or by non nucleoside RT inhibitors (NNRTIs). NRTIs act as chain terminators, whereas NNRTIs inhibit DNA polymerization by binding a small hydrophobic pocket near the RT active site and inducing an allosteric change in this region. Classical NRTIs are abacavir, adefovir (PMEA), didanosine (ddI), lamivudine (3TC), stavudine (d4T), tenofovir (PMPA), zalcitabine (ddC), and zidovudine (AZT). Classical NNRTIs are atevirdine (BHAP U-87201E), delavirdine, efavirenz (DMP-266), emivirine (I-EBU), and nevirapine (BI-RG-587). The tritherapies used as a basic effective treatment of AIDS associate two NRTIs and one NNRTI. Use of protease inhibitors in tritherapy regimens permit more ambitious therapeutic strategies. Functionally, gag-Pol polyprotein and Gag polyprotein may regulate their own translation, by the binding genomic RNA in the 5'-UTR. At low concentration, Gag-Pol and Gag would promote translation, whereas at high concentration, the polyproteins encapsidate genomic RNA and then shut off translation. In terms of biological role, matrix protein p17 targets Gag and Gag-pol polyproteins to the plasma membrane via a multipartite membrane-binding signal, that includes its myristoylated N-terminus. Matrix protein is part of the pre-integration complex. Implicated in the release from host cell mediated by Vpu. Binds to RNA. Its function is as follows. Forms the conical core that encapsulates the genomic RNA-nucleocapsid complex in the virion. Most core are conical, with only 7% tubular. The core is constituted by capsid protein hexamer subunits. The core is disassembled soon after virion entry. Host restriction factors such as TRIM5-alpha or TRIMCyp bind retroviral capsids and cause premature capsid disassembly, leading to blocks in reverse transcription. Capsid restriction by TRIM5 is one of the factors which restricts HIV-1 to the human species. Host PIN1 apparently facilitates the virion uncoating. On the other hand, interactions with PDZD8 or CYPA stabilize the capsid. Nucleocapsid protein p7 encapsulates and protects viral dimeric unspliced genomic RNA (gRNA). Binds these RNAs through its zinc fingers. Acts as a nucleic acid chaperone which is involved in rearangement of nucleic acid secondary structure during gRNA retrotranscription. Also facilitates template switch leading to recombination. As part of the polyprotein, participates in gRNA dimerization, packaging, tRNA incorporation and virion assembly. Functionally, the aspartyl protease mediates proteolytic cleavages of Gag and Gag-Pol polyproteins during or shortly after the release of the virion from the plasma membrane. Cleavages take place as an ordered, step-wise cascade to yield mature proteins. This process is called maturation. Displays maximal activity during the budding process just prior to particle release from the cell. Also cleaves Nef and Vif, probably concomitantly with viral structural proteins on maturation of virus particles. Hydrolyzes host EIF4GI and PABP1 in order to shut off the capped cellular mRNA translation. The resulting inhibition of cellular protein synthesis serves to ensure maximal viral gene expression and to evade host immune response. Also mediates cleavage of host YTHDF3. Mediates cleavage of host CARD8, thereby activating the CARD8 inflammasome, leading to the clearance of latent HIV-1 in patient CD4(+) T-cells after viral reactivation; in contrast, HIV-1 can evade CARD8-sensing when its protease remains inactive in infected cells prior to viral budding. In terms of biological role, reverse transcriptase/ribonuclease H (RT) is a multifunctional enzyme that converts the viral RNA genome into dsDNA in the cytoplasm, shortly after virus entry into the cell. This enzyme displays a DNA polymerase activity that can copy either DNA or RNA templates, and a ribonuclease H (RNase H) activity that cleaves the RNA strand of RNA-DNA heteroduplexes in a partially processive 3' to 5' endonucleasic mode. Conversion of viral genomic RNA into dsDNA requires many steps. A tRNA(3)-Lys binds to the primer-binding site (PBS) situated at the 5'-end of the viral RNA. RT uses the 3' end of the tRNA primer to perform a short round of RNA-dependent minus-strand DNA synthesis. The reading proceeds through the U5 region and ends after the repeated (R) region which is present at both ends of viral RNA. The portion of the RNA-DNA heteroduplex is digested by the RNase H, resulting in a ssDNA product attached to the tRNA primer. This ssDNA/tRNA hybridizes with the identical R region situated at the 3' end of viral RNA. This template exchange, known as minus-strand DNA strong stop transfer, can be either intra- or intermolecular. RT uses the 3' end of this newly synthesized short ssDNA to perform the RNA-dependent minus-strand DNA synthesis of the whole template. RNase H digests the RNA template except for two polypurine tracts (PPTs) situated at the 5'-end and near the center of the genome. It is not clear if both polymerase and RNase H activities are simultaneous. RNase H probably can proceed both in a polymerase-dependent (RNA cut into small fragments by the same RT performing DNA synthesis) and a polymerase-independent mode (cleavage of remaining RNA fragments by free RTs). Secondly, RT performs DNA-directed plus-strand DNA synthesis using the PPTs that have not been removed by RNase H as primers. PPTs and tRNA primers are then removed by RNase H. The 3' and 5' ssDNA PBS regions hybridize to form a circular dsDNA intermediate. Strand displacement synthesis by RT to the PBS and PPT ends produces a blunt ended, linear dsDNA copy of the viral genome that includes long terminal repeats (LTRs) at both ends. Its function is as follows. Catalyzes viral DNA integration into the host chromosome, by performing a series of DNA cutting and joining reactions. This enzyme activity takes place after virion entry into a cell and reverse transcription of the RNA genome in dsDNA. The first step in the integration process is 3' processing. This step requires a complex comprising the viral genome, matrix protein, Vpr and integrase. This complex is called the pre-integration complex (PIC). The integrase protein removes 2 nucleotides from each 3' end of the viral DNA, leaving recessed CA OH's at the 3' ends. In the second step, the PIC enters cell nucleus. This process is mediated through integrase and Vpr proteins, and allows the virus to infect a non dividing cell. This ability to enter the nucleus is specific of lentiviruses, other retroviruses cannot and rely on cell division to access cell chromosomes. In the third step, termed strand transfer, the integrase protein joins the previously processed 3' ends to the 5' ends of strands of target cellular DNA at the site of integration. The 5'-ends are produced by integrase-catalyzed staggered cuts, 5 bp apart. A Y-shaped, gapped, recombination intermediate results, with the 5'-ends of the viral DNA strands and the 3' ends of target DNA strands remaining unjoined, flanking a gap of 5 bp. The last step is viral DNA integration into host chromosome. This involves host DNA repair synthesis in which the 5 bp gaps between the unjoined strands are filled in and then ligated. Since this process occurs at both cuts flanking the HIV genome, a 5 bp duplication of host DNA is produced at the ends of HIV-1 integration. Alternatively, Integrase may catalyze the excision of viral DNA just after strand transfer, this is termed disintegration. This Homo sapiens (Human) protein is Gag-Pol polyprotein (gag-pol).